We begin with the raw amino-acid sequence, 398 residues long: Enoyl-[acyl-carrier-protein] reductase [NADH] (398 aa).

NAD(+) is bound by residues 48–53 (GSSTGY), 74–75 (FE), 111–112 (DA), and 139–140 (LA). Tyr-225 contacts substrate. Tyr-235 serves as the catalytic Proton donor. Residues Lys-244 and 273-275 (VVT) contribute to the NAD(+) site.

Belongs to the TER reductase family. As to quaternary structure, monomer.

It catalyses the reaction a 2,3-saturated acyl-[ACP] + NAD(+) = a (2E)-enoyl-[ACP] + NADH + H(+). Its pathway is lipid metabolism; fatty acid biosynthesis. Involved in the final reduction of the elongation cycle of fatty acid synthesis (FAS II). Catalyzes the reduction of a carbon-carbon double bond in an enoyl moiety that is covalently linked to an acyl carrier protein (ACP). The protein is Enoyl-[acyl-carrier-protein] reductase [NADH] of Pseudomonas aeruginosa (strain UCBPP-PA14).